Here is a 199-residue protein sequence, read N- to C-terminus: Pneumococcal vaccine antigen A homolog (199 aa).

The protein resides in the cell surface. In Streptococcus pyogenes serotype M3 (strain ATCC BAA-595 / MGAS315), this protein is Pneumococcal vaccine antigen A homolog (pvaA).